The primary structure comprises 206 residues: High-affinity nitrate transporter-activating protein 2.1 (206 aa).

The signal sequence occupies residues 1-27 (MARLAGVAALSLVLVLLGAGVPRPAAA). The chain crosses the membrane as a helical span at residues 180-200 (VAAGVFSTFSIAALAFFFVVE).

This sequence belongs to the NAR2 family. As to quaternary structure, heterotetramer composed of two NRT2.1, NRT2.2 or NRT2.3 and two NAR2.1. Interacts with NRT2.1, NRT2.2 and isoform 1 of NRT2.3. As to expression, expressed in epidermal cells of primary and lateral roots, root-shoot junction zone, vascular tissues of adventitious root primordia, stems and coleoptiles of germinating seeds.

Its subcellular location is the cell membrane. Its function is as follows. Acts as a dual component transporter with NTR2.1, NRT2.2 and NRT2.3. Required for high-affinity nitrate transport. Involved in the regulation of NRT2.1, NRT2.2 and NRT2.3 expression, and in both, HATS (high-affinity transport system) and LATS (low-affinity transport system) activities in plant roots. Imports nitrate with high affinity when expressed with NTR2.1, NTR2.2 or NTR2.3 in a heterologous system (Xenopus oocytes). The sequence is that of High-affinity nitrate transporter-activating protein 2.1 (NAR2.1) from Oryza sativa subsp. japonica (Rice).